Here is a 256-residue protein sequence, read N- to C-terminus: Enolase-phosphatase E1 (256 aa).

Positions 14 and 16 each coordinate Mg(2+). Residues 142-143 (SS) and K176 each bind substrate. D201 contributes to the Mg(2+) binding site.

It belongs to the HAD-like hydrolase superfamily. MasA/MtnC family. As to quaternary structure, monomer. The cofactor is Mg(2+).

The protein resides in the cytoplasm. It localises to the nucleus. It catalyses the reaction 5-methylsulfanyl-2,3-dioxopentyl phosphate + H2O = 1,2-dihydroxy-5-(methylsulfanyl)pent-1-en-3-one + phosphate. It participates in amino-acid biosynthesis; L-methionine biosynthesis via salvage pathway; L-methionine from S-methyl-5-thio-alpha-D-ribose 1-phosphate: step 3/6. Its pathway is amino-acid biosynthesis; L-methionine biosynthesis via salvage pathway; L-methionine from S-methyl-5-thio-alpha-D-ribose 1-phosphate: step 4/6. Its function is as follows. Bifunctional enzyme that catalyzes the enolization of 2,3-diketo-5-methylthiopentyl-1-phosphate (DK-MTP-1-P) into the intermediate 2-hydroxy-3-keto-5-methylthiopentenyl-1-phosphate (HK-MTPenyl-1-P), which is then dephosphorylated to form the acireductone 1,2-dihydroxy-3-keto-5-methylthiopentene (DHK-MTPene). The protein is Enolase-phosphatase E1 of Drosophila yakuba (Fruit fly).